Consider the following 184-residue polypeptide: Photosystem I assembly protein Ycf4 (184 aa).

Helical transmembrane passes span 22–42 and 57–77; these read FFWACILFLGSLGFLVVGTSS and ISFFPQGIVMSFYGIAGLFIS.

This sequence belongs to the Ycf4 family.

Its subcellular location is the plastid. It localises to the chloroplast thylakoid membrane. Seems to be required for the assembly of the photosystem I complex. This Lemna minor (Common duckweed) protein is Photosystem I assembly protein Ycf4.